The chain runs to 231 residues: Protein OPG061 (231 aa).

It belongs to the orthopoxvirus OPG058 family.

It localises to the host nucleus. Its subcellular location is the host nucleolus. The protein is Protein OPG061 (OPG061) of Homo sapiens (Human).